Reading from the N-terminus, the 104-residue chain is Matrix Gla protein (104 aa).

Positions 1–19 are cleaved as a signal peptide; it reads MKSLLPLAILAALAVATLC. The residue at position 21 (Glu-21) is a 4-carboxyglutamate. Phosphoserine occurs at positions 22, 25, and 28. Residues 51–97 form the Gla domain; sequence RAKAQKRVQERNKPAYEINREACDDYKLCERYAMVYGYNAAYNRYFR. A 4-carboxyglutamate mark is found at Glu-60, Glu-67, and Glu-71. A disulfide bridge connects residues Cys-73 and Cys-79.

This sequence belongs to the osteocalcin/matrix Gla protein family. Post-translationally, requires vitamin K-dependent gamma-carboxylation for its function.

It localises to the secreted. Its function is as follows. Associates with the organic matrix of bone and cartilage. Thought to act as an inhibitor of bone formation. The polypeptide is Matrix Gla protein (Mgp) (Mus musculus (Mouse)).